A 306-amino-acid chain; its full sequence is MLPYIALILVCWSVLSQAAQTDVEGRADKRRPIWIMGHMVNAIAQIDEFVNLGANSIETDVSFDDNANPEYTYHGVPCDCGRSCLKWENFNDFLKGLRSATTPGNAKYQAKLILVVFDLKTGSLYDNQANEAGKKLAKNLLKHYWNNGNNGGRAYIVLSIPDLNHYPLIKGFKDQLTQDGHPELMDKVGHDFSGNDAIGDVGNAYKKAGISGHVWQSDGITNCLLRGLDRVKQAIANRDSGNGFINKVYYWTVDKRATTRDALDAGVDGVMTNYPDVITDVLNESAYKNKFRVASYEDNPWETFKK.

The first 18 residues, 1 to 18 (MLPYIALILVCWSVLSQA), serve as a signal peptide directing secretion. Positions 19–26 (AQTDVEGR) are excised as a propeptide. H38 is an active-site residue. Mg(2+)-binding residues include E58 and D60. Catalysis depends on H74, which acts as the Nucleophile. Disulfide bonds link C78–C84 and C80–C223. D118 is a binding site for Mg(2+). The N-linked (GlcNAc...) asparagine glycan is linked to N283.

Belongs to the arthropod phospholipase D family. Class II subfamily. It depends on Mg(2+) as a cofactor. In terms of tissue distribution, expressed by the venom gland.

It localises to the secreted. The catalysed reaction is an N-(acyl)-sphingosylphosphocholine = an N-(acyl)-sphingosyl-1,3-cyclic phosphate + choline. It carries out the reaction an N-(acyl)-sphingosylphosphoethanolamine = an N-(acyl)-sphingosyl-1,3-cyclic phosphate + ethanolamine. It catalyses the reaction a 1-acyl-sn-glycero-3-phosphocholine = a 1-acyl-sn-glycero-2,3-cyclic phosphate + choline. The enzyme catalyses a 1-acyl-sn-glycero-3-phosphoethanolamine = a 1-acyl-sn-glycero-2,3-cyclic phosphate + ethanolamine. Dermonecrotic toxins cleave the phosphodiester linkage between the phosphate and headgroup of certain phospholipids (sphingolipid and lysolipid substrates), forming an alcohol (often choline) and a cyclic phosphate. This toxin acts on sphingomyelin (SM). It may also act on ceramide phosphoethanolamine (CPE), lysophosphatidylcholine (LPC) and lysophosphatidylethanolamine (LPE), but not on lysophosphatidylserine (LPS), and lysophosphatidylglycerol (LPG). It acts by transphosphatidylation, releasing exclusively cyclic phosphate products as second products. Induces dermonecrosis, hemolysis, increased vascular permeability, edema, inflammatory response, and platelet aggregation. In Loxosceles intermedia (Brown spider), this protein is Dermonecrotic toxin LiSicTox-alphaIA2bi.